The chain runs to 286 residues: Glycine--tRNA ligase alpha subunit (286 aa).

This sequence belongs to the class-II aminoacyl-tRNA synthetase family. In terms of assembly, tetramer of two alpha and two beta subunits.

The protein localises to the cytoplasm. The enzyme catalyses tRNA(Gly) + glycine + ATP = glycyl-tRNA(Gly) + AMP + diphosphate. The chain is Glycine--tRNA ligase alpha subunit (glyQ) from Thermotoga maritima (strain ATCC 43589 / DSM 3109 / JCM 10099 / NBRC 100826 / MSB8).